A 62-amino-acid polypeptide reads, in one-letter code: Venom protein 51.1 (62 aa).

A signal peptide spans 1-25 (MKFFGILLIVTMVVLVMIATTYVES). 3 disulfides stabilise this stretch: Cys-32/Cys-53, Cys-39/Cys-58, and Cys-43/Cys-60.

As to expression, expressed by the venom gland.

Its subcellular location is the secreted. Neurotoxin. Decreases the action potential of myelinated nerves in mice and frogs. The protein is Venom protein 51.1 of Lychas mucronatus (Chinese swimming scorpion).